A 232-amino-acid chain; its full sequence is Noggin (232 aa).

The N-terminal stretch at M1–G27 is a signal peptide. N62 is a glycosylation site (N-linked (GlcNAc...) asparagine). Positions G77–E99 are disordered. 4 cysteine pairs are disulfide-bonded: C155–C192, C178–C228, C184–C230, and C207–C215.

The protein belongs to the noggin family. In terms of assembly, homodimer. Interacts with GDF5; inhibits chondrocyte differentiation. As to expression, expressed in condensing cartilage and immature chondrocytes.

It localises to the secreted. In terms of biological role, essential for cartilage morphogenesis and joint formation. Inhibitor of bone morphogenetic proteins (BMP) signaling which is required for growth and patterning of the neural tube and somite. Inhibits chondrocyte differentiation through its interaction with GDF5 and, probably, GDF6. The sequence is that of Noggin (Nog) from Mus musculus (Mouse).